The following is a 247-amino-acid chain: Probable transcriptional regulatory protein Gura_1416 (247 aa).

It belongs to the TACO1 family.

It localises to the cytoplasm. The sequence is that of Probable transcriptional regulatory protein Gura_1416 from Geotalea uraniireducens (strain Rf4) (Geobacter uraniireducens).